We begin with the raw amino-acid sequence, 387 residues long: Phosphoglycerate kinase (387 aa).

Residues 21 to 23 (DLN), arginine 36, 59 to 62 (HLGR), arginine 113, and arginine 146 each bind substrate. Residues lysine 197, glutamate 314, and 340–343 (GGDT) contribute to the ATP site.

It belongs to the phosphoglycerate kinase family. In terms of assembly, monomer.

The protein localises to the cytoplasm. It carries out the reaction (2R)-3-phosphoglycerate + ATP = (2R)-3-phospho-glyceroyl phosphate + ADP. Its pathway is carbohydrate degradation; glycolysis; pyruvate from D-glyceraldehyde 3-phosphate: step 2/5. This chain is Phosphoglycerate kinase, found in Aliivibrio salmonicida (strain LFI1238) (Vibrio salmonicida (strain LFI1238)).